The primary structure comprises 143 residues: Large ribosomal subunit protein uL11 (143 aa).

It belongs to the universal ribosomal protein uL11 family. In terms of assembly, part of the ribosomal stalk of the 50S ribosomal subunit. Interacts with L10 and the large rRNA to form the base of the stalk. L10 forms an elongated spine to which L12 dimers bind in a sequential fashion forming a multimeric L10(L12)X complex. One or more lysine residues are methylated.

In terms of biological role, forms part of the ribosomal stalk which helps the ribosome interact with GTP-bound translation factors. The chain is Large ribosomal subunit protein uL11 from Erythrobacter litoralis (strain HTCC2594).